The sequence spans 370 residues: Chorismate synthase (370 aa).

Residue R48 participates in NADP(+) binding. Residues 125 to 127 (RSS), 241 to 242 (NA), G285, 300 to 304 (KPTSS), and R326 each bind FMN.

It belongs to the chorismate synthase family. As to quaternary structure, homotetramer. FMNH2 serves as cofactor.

The catalysed reaction is 5-O-(1-carboxyvinyl)-3-phosphoshikimate = chorismate + phosphate. The protein operates within metabolic intermediate biosynthesis; chorismate biosynthesis; chorismate from D-erythrose 4-phosphate and phosphoenolpyruvate: step 7/7. Its function is as follows. Catalyzes the anti-1,4-elimination of the C-3 phosphate and the C-6 proR hydrogen from 5-enolpyruvylshikimate-3-phosphate (EPSP) to yield chorismate, which is the branch point compound that serves as the starting substrate for the three terminal pathways of aromatic amino acid biosynthesis. This reaction introduces a second double bond into the aromatic ring system. The sequence is that of Chorismate synthase from Jannaschia sp. (strain CCS1).